We begin with the raw amino-acid sequence, 165 residues long: P2Y purinoceptor 4 (165 aa).

The chain crosses the membrane as a helical span at residues 1 to 16 (SDTLYVLSLPTLVYYY). Topologically, residues 17–30 (AARNHWPFGTGFCK) are extracellular. A helical transmembrane segment spans residues 31 to 51 (FVRFLFYWNLYCSVLFLTCIS). Residues 52-74 (VHRYMGICHPLRALRWGRPRFAS) lie on the Cytoplasmic side of the membrane. A helical membrane pass occupies residues 75–95 (LLCLAVWLVVAGCLVPNLFFV). Residues 96–124 (TTSPNGTTILCHDTTRPEEFDHYVHFSSA) lie on the Extracellular side of the membrane. Residue N100 is glycosylated (N-linked (GlcNAc...) asparagine). The helical transmembrane segment at 125–145 (VMVLLFGLPFLVTLVCYGLMA) threads the bilayer. The Cytoplasmic segment spans residues 146 to 165 (RRLYRPLPGAGQSSSRLRSL).

Belongs to the G-protein coupled receptor 1 family.

Its subcellular location is the cell membrane. Its function is as follows. Receptor for UTP and UDP coupled to G-proteins that activate a phosphatidylinositol-calcium second messenger system. The sequence is that of P2Y purinoceptor 4 (P2RY4) from Cricetulus griseus (Chinese hamster).